The chain runs to 52 residues: ATP synthase protein 8 (52 aa).

The chain crosses the membrane as a helical span at residues Pro6–Asn26.

Belongs to the ATPase protein 8 family. F-type ATPases have 2 components, CF(1) - the catalytic core - and CF(0) - the membrane proton channel.

It localises to the mitochondrion membrane. In terms of biological role, mitochondrial membrane ATP synthase (F(1)F(0) ATP synthase or Complex V) produces ATP from ADP in the presence of a proton gradient across the membrane which is generated by electron transport complexes of the respiratory chain. F-type ATPases consist of two structural domains, F(1) - containing the extramembraneous catalytic core and F(0) - containing the membrane proton channel, linked together by a central stalk and a peripheral stalk. During catalysis, ATP synthesis in the catalytic domain of F(1) is coupled via a rotary mechanism of the central stalk subunits to proton translocation. Part of the complex F(0) domain. Minor subunit located with subunit a in the membrane. The sequence is that of ATP synthase protein 8 (MT-ATP8) from Albinaria turrita (Door snail).